The primary structure comprises 315 residues: Ribonuclease Z (315 aa).

Histidine 61, histidine 63, aspartate 65, histidine 66, histidine 151, aspartate 219, and histidine 278 together coordinate Zn(2+). The active-site Proton acceptor is aspartate 65.

This sequence belongs to the RNase Z family. In terms of assembly, homodimer. It depends on Zn(2+) as a cofactor.

The catalysed reaction is Endonucleolytic cleavage of RNA, removing extra 3' nucleotides from tRNA precursor, generating 3' termini of tRNAs. A 3'-hydroxy group is left at the tRNA terminus and a 5'-phosphoryl group is left at the trailer molecule.. Its function is as follows. Zinc phosphodiesterase, which displays some tRNA 3'-processing endonuclease activity. Probably involved in tRNA maturation, by removing a 3'-trailer from precursor tRNA. This chain is Ribonuclease Z, found in Clostridium botulinum (strain Eklund 17B / Type B).